The sequence spans 42 residues: uncharacterized protein (42 aa).

The tract at residues 20–42 (RSGRAERGVRAHSPAWSERPTPN) is disordered.

This is an uncharacterized protein from Escherichia coli.